A 510-amino-acid polypeptide reads, in one-letter code: Chromosomal replication initiator protein DnaA (510 aa).

A domain I, interacts with DnaA modulators region spans residues 1–107; sequence MTNDPGSGFA…VRIAPPPADD (107 aa). The segment at 107-169 is domain II; it reads DDDDSVAAAV…ADTSASAGGT (63 aa). Residues 119 to 168 form a disordered region; that stretch reads PGLEASPETSQEVSDEIDDFGENAPNSRQSWPTHFKKRSTDADTSASAGG. The segment at 170–386 is domain III, AAA+ region; the sequence is SLNRRYTFDT…GALIRVTAFA (217 aa). ATP contacts are provided by glycine 214, glycine 216, lysine 217, and threonine 218. A domain IV, binds dsDNA region spans residues 387–510; that stretch reads SLNKTPIDKA…TTRIRQRSKR (124 aa).

The protein belongs to the DnaA family. Oligomerizes as a right-handed, spiral filament on DNA at oriC.

It localises to the cytoplasm. Functionally, plays an essential role in the initiation and regulation of chromosomal replication. ATP-DnaA binds to the origin of replication (oriC) to initiate formation of the DNA replication initiation complex once per cell cycle. Binds the DnaA box (a 9 base pair repeat at the origin) and separates the double-stranded (ds)DNA. Forms a right-handed helical filament on oriC DNA; dsDNA binds to the exterior of the filament while single-stranded (ss)DNA is stabiized in the filament's interior. The ATP-DnaA-oriC complex binds and stabilizes one strand of the AT-rich DNA unwinding element (DUE), permitting loading of DNA polymerase. After initiation quickly degrades to an ADP-DnaA complex that is not apt for DNA replication. Binds acidic phospholipids. In Mycobacterium marinum (strain ATCC BAA-535 / M), this protein is Chromosomal replication initiator protein DnaA.